The following is a 343-amino-acid chain: Protein RecA (343 aa).

ATP is bound at residue 64–71; that stretch reads GPESSGKT.

The protein belongs to the RecA family.

It localises to the cytoplasm. In terms of biological role, can catalyze the hydrolysis of ATP in the presence of single-stranded DNA, the ATP-dependent uptake of single-stranded DNA by duplex DNA, and the ATP-dependent hybridization of homologous single-stranded DNAs. It interacts with LexA causing its activation and leading to its autocatalytic cleavage. The polypeptide is Protein RecA (Bacillus mycoides (strain KBAB4) (Bacillus weihenstephanensis)).